The chain runs to 689 residues: MRRHKRWPLRSLVCSFSSSAAETVTTSTAASATAAFPLKHVTRSNFETTLNDLRSLVKAADFVAIDLEMTGVTSAPWRDSLEFDRYDVRYLKVKDSAEKFAVVQFGVCPFRWDSRTQSFVSYPHNFFVFPRQELTFDPPAHEFLCQTTSMDFLAKYQFDFNTCIHEGISYLSRREEEEASKRLKMLHGEDGIDSSGETEELKLVRLADVLFAARMEKLLNEWRSGLLHGGNASSEFPRISNGSNQSMETVFHHMRPALSLKGFTSHQLRVLNSVLRKHFGDLVYIHSNDKSSSSRDIVVYTDSDSDKENLMKEAKDERKRLAERKIQSAIGFRQVIDLLASEKKLIVGHNCFLDIAHVYSKFVGPLPSTAEKFVASINSHFPYIVDTKILLNVNPMLHQRMKKSSTSLSSAFSSLCPQIEFSSRSSDSFLQQRVNIDVEIDNVRCSNWNAGGKHEAGYDAFMTGCIFAQACNHLGFDFKQHSQLDDFAQNEKLEKYINRLYLSWTRGDIIDLRTGHSNADNWRVSKFKYENIVLIWNFPRKLKARGIKECICKAFGSASVTSVYHVDDSAVFVLFKNSELVWDFLALKRQLESSDGPVSVLHPLSKILEGGNTGAADYEAYKEICSSHVSEVMFSDQAETVGVKSRTRPNAQCETETREENTVTVTHKASDLIDAFLANRVEVETATSN.

A divalent metal cation is bound by residues Asp-66, Glu-68, Asp-354, and Asp-459.

The protein belongs to the CAF1 family. A divalent metal cation is required as a cofactor. As to expression, widely expressed. Expressed in roots, stems, leaves and flowers.

The protein resides in the nucleus. It is found in the cytoplasm. It carries out the reaction Exonucleolytic cleavage of poly(A) to 5'-AMP.. 3'-exoribonuclease that has a preference for poly(A) tails of mRNAs, thereby efficiently degrading poly(A) tails. Exonucleolytic degradation of the poly(A) tail is often the first step in the decay of eukaryotic mRNAs. Essential for early development, possibly by participating in silencing certain maternal mRNAs translationally. May have a pivotal role in stress response. This Arabidopsis thaliana (Mouse-ear cress) protein is Poly(A)-specific ribonuclease PARN (PARN).